A 96-amino-acid chain; its full sequence is Small ribosomal subunit protein bS18 (96 aa).

A compositionally biased stretch (basic residues) spans 1–18 (MPPPRGKGRFGKDKRPKR). Residues 1-21 (MPPPRGKGRFGKDKRPKRNTQ) are disordered.

The protein belongs to the bacterial ribosomal protein bS18 family. Part of the 30S ribosomal subunit. Forms a tight heterodimer with protein bS6.

Binds as a heterodimer with protein bS6 to the central domain of the 16S rRNA, where it helps stabilize the platform of the 30S subunit. In Methylibium petroleiphilum (strain ATCC BAA-1232 / LMG 22953 / PM1), this protein is Small ribosomal subunit protein bS18.